A 476-amino-acid chain; its full sequence is Aspartyl/glutamyl-tRNA(Asn/Gln) amidotransferase subunit B 1 (476 aa).

This sequence belongs to the GatB/GatE family. GatB subfamily. Heterotrimer of A, B and C subunits.

The enzyme catalyses L-glutamyl-tRNA(Gln) + L-glutamine + ATP + H2O = L-glutaminyl-tRNA(Gln) + L-glutamate + ADP + phosphate + H(+). The catalysed reaction is L-aspartyl-tRNA(Asn) + L-glutamine + ATP + H2O = L-asparaginyl-tRNA(Asn) + L-glutamate + ADP + phosphate + 2 H(+). Allows the formation of correctly charged Asn-tRNA(Asn) or Gln-tRNA(Gln) through the transamidation of misacylated Asp-tRNA(Asn) or Glu-tRNA(Gln) in organisms which lack either or both of asparaginyl-tRNA or glutaminyl-tRNA synthetases. The reaction takes place in the presence of glutamine and ATP through an activated phospho-Asp-tRNA(Asn) or phospho-Glu-tRNA(Gln). This Clostridium acetobutylicum (strain ATCC 824 / DSM 792 / JCM 1419 / IAM 19013 / LMG 5710 / NBRC 13948 / NRRL B-527 / VKM B-1787 / 2291 / W) protein is Aspartyl/glutamyl-tRNA(Asn/Gln) amidotransferase subunit B 1 (gatB1).